Here is a 167-residue protein sequence, read N- to C-terminus: Large ribosomal subunit protein uL10 (167 aa).

The protein belongs to the universal ribosomal protein uL10 family. In terms of assembly, part of the ribosomal stalk of the 50S ribosomal subunit. The N-terminus interacts with L11 and the large rRNA to form the base of the stalk. The C-terminus forms an elongated spine to which L12 dimers bind in a sequential fashion forming a multimeric L10(L12)X complex.

In terms of biological role, forms part of the ribosomal stalk, playing a central role in the interaction of the ribosome with GTP-bound translation factors. The polypeptide is Large ribosomal subunit protein uL10 (Psychromonas ingrahamii (strain DSM 17664 / CCUG 51855 / 37)).